A 380-amino-acid chain; its full sequence is Succinyl-diaminopimelate desuccinylase (380 aa).

Residue His69 participates in Zn(2+) binding. Residue Asp71 is part of the active site. Asp102 provides a ligand contact to Zn(2+). The active-site Proton acceptor is Glu135. Residues Glu136, Glu164, and His353 each contribute to the Zn(2+) site.

It belongs to the peptidase M20A family. DapE subfamily. Homodimer. Zn(2+) is required as a cofactor. Requires Co(2+) as cofactor.

The enzyme catalyses N-succinyl-(2S,6S)-2,6-diaminopimelate + H2O = (2S,6S)-2,6-diaminopimelate + succinate. It functions in the pathway amino-acid biosynthesis; L-lysine biosynthesis via DAP pathway; LL-2,6-diaminopimelate from (S)-tetrahydrodipicolinate (succinylase route): step 3/3. Catalyzes the hydrolysis of N-succinyl-L,L-diaminopimelic acid (SDAP), forming succinate and LL-2,6-diaminopimelate (DAP), an intermediate involved in the bacterial biosynthesis of lysine and meso-diaminopimelic acid, an essential component of bacterial cell walls. The chain is Succinyl-diaminopimelate desuccinylase from Cereibacter sphaeroides (strain ATCC 17025 / ATH 2.4.3) (Rhodobacter sphaeroides).